The primary structure comprises 373 residues: GTP cyclohydrolase 1 type 2 homolog (373 aa).

A divalent metal cation is bound by residues histidine 68, histidine 69, aspartate 107, histidine 333, and glutamate 336.

This sequence belongs to the GTP cyclohydrolase I type 2/NIF3 family. Homohexamer.

In Bacillus subtilis (strain 168), this protein is GTP cyclohydrolase 1 type 2 homolog (yqfO).